The primary structure comprises 44 residues: Mu-conotoxin-like Cal 12.1.1e (44 aa).

4 disulfides stabilise this stretch: cysteine 3–cysteine 16, cysteine 11–cysteine 28, cysteine 18–cysteine 33, and cysteine 27–cysteine 38. Tryptophan 17 is modified (6'-bromotryptophan). A 4-hydroxyproline modification is found at proline 23. 6'-bromotryptophan is present on residues tryptophan 36 and tryptophan 37. Position 39 is a 4-hydroxyproline (proline 39). Tryptophan 43 carries the post-translational modification 6'-bromotryptophan.

In terms of tissue distribution, expressed by the venom duct.

It is found in the secreted. Mu-conotoxins block voltage-gated sodium channels. This toxin reversibly blocks voltage-gated sodium channel in cephalopods, with no alteration in the voltage dependence of sodium conductance or on the kinetics of inactivation. This Californiconus californicus (California cone) protein is Mu-conotoxin-like Cal 12.1.1e.